We begin with the raw amino-acid sequence, 458 residues long: UDP-N-acetylmuramoylalanine--D-glutamate ligase (458 aa).

124–130 (GSDGKTT) provides a ligand contact to ATP.

This sequence belongs to the MurCDEF family.

The protein localises to the cytoplasm. It catalyses the reaction UDP-N-acetyl-alpha-D-muramoyl-L-alanine + D-glutamate + ATP = UDP-N-acetyl-alpha-D-muramoyl-L-alanyl-D-glutamate + ADP + phosphate + H(+). It functions in the pathway cell wall biogenesis; peptidoglycan biosynthesis. Functionally, cell wall formation. Catalyzes the addition of glutamate to the nucleotide precursor UDP-N-acetylmuramoyl-L-alanine (UMA). This chain is UDP-N-acetylmuramoylalanine--D-glutamate ligase, found in Clostridium perfringens (strain 13 / Type A).